Reading from the N-terminus, the 486-residue chain is Maintenance of mitochondrial morphology protein 1 (486 aa).

The Lumenal portion of the chain corresponds to 1-19 (MSNDTSAQPAQSSLSFTQG). A helical membrane pass occupies residues 20 to 40 (LLVGQLSVVLLIGAFIKFFIF). Over 41-486 (GEASPSSSRS…GSLPDVVPVT (446 aa)) the chain is Cytoplasmic. 4 disordered regions span residues 45–98 (PSSS…RSIL), 269–318 (QTST…AGTT), 393–412 (VRGQ…GVST), and 420–486 (ARDA…VPVT). The segment covering 51-61 (QTRRTSPHKRS) has biased composition (basic residues). Residues 70-79 (LGSRSLKEKP) show a composition bias toward basic and acidic residues. Composition is skewed to polar residues over residues 80-96 (SSNV…NTRS), 269-291 (QTST…NDYS), 307-318 (EQATQANNAGTT), and 401-412 (EVGSSGNAGVST). Positions 125–382 (QPESLDWFNV…EPRVQVVALP (258 aa)) constitute an SMP-LTD domain. Composition is skewed to basic and acidic residues over residues 429–440 (HATRDADMEGLR) and 462–473 (DSREQACRDDPF).

The protein belongs to the MMM1 family. As to quaternary structure, homodimer. Component of the ER-mitochondria encounter structure (ERMES) or MDM complex, composed of MMM1, MDM10, MDM12 and MDM34. An MMM1 homodimer associates with one molecule of MDM12 on each side in a pairwise head-to-tail manner, and the SMP-LTD domains of MMM1 and MDM12 generate a continuous hydrophobic tunnel for phospholipid trafficking.

The protein resides in the endoplasmic reticulum membrane. Functionally, component of the ERMES/MDM complex, which serves as a molecular tether to connect the endoplasmic reticulum (ER) and mitochondria. Components of this complex are involved in the control of mitochondrial shape and protein biogenesis, and function in nonvesicular lipid trafficking between the ER and mitochondria. The MDM12-MMM1 subcomplex functions in the major beta-barrel assembly pathway that is responsible for biogenesis of all outer membrane beta-barrel proteins, and acts in a late step after the SAM complex. The MDM10-MDM12-MMM1 subcomplex further acts in the TOM40-specific pathway after the action of the MDM12-MMM1 complex. Essential for establishing and maintaining the structure of mitochondria and maintenance of mtDNA nucleoids. The protein is Maintenance of mitochondrial morphology protein 1 of Coccidioides immitis (strain RS) (Valley fever fungus).